The following is a 381-amino-acid chain: Alkanesulfonate monooxygenase (381 aa).

The protein belongs to the SsuD family. As to quaternary structure, homotetramer.

It carries out the reaction an alkanesulfonate + FMNH2 + O2 = an aldehyde + FMN + sulfite + H2O + 2 H(+). In terms of biological role, catalyzes the desulfonation of aliphatic sulfonates. The polypeptide is Alkanesulfonate monooxygenase (Shigella flexneri serotype 5b (strain 8401)).